A 279-amino-acid chain; its full sequence is Inhibitor of growth protein 1 (279 aa).

The interval 115–206 is disordered; it reads AHQDISDGTG…EASPADLPID (92 aa). A Glycyl lysine isopeptide (Lys-Gly) (interchain with G-Cter in SUMO2) cross-link involves residue K135. Over residues 154–171 the composition is skewed to basic and acidic residues; that stretch reads RNNENRENASNNHDHDDI. Positions 179–191 are enriched in basic residues; sequence KKAKTSKKKKRSK. Residues 210-259 form a PHD-type zinc finger; it reads PTYCLCNQVSYGEMIGCDNDECPIEWFHFSCVGLNHKPKGKWYCPKCRGE. Zn(2+)-binding residues include C213, C215, C226, C231, H237, C240, C253, and C256. The tract at residues 262–279 is PBR; sequence KTMDKALEKSKKERAYNR.

The protein belongs to the ING family. Interacts with H3K4me3 and to a lesser extent with H3K4me2. Isoform 2 interacts with RSL1D1. In terms of tissue distribution, in the adult, widely expressed with highest levels in thymus and testis.

It is found in the nucleus. In terms of biological role, isoform 1 inhibits p53-dependent transcriptional activation and may function as an oncoprotein. Isoform 2 acts as a negative growth regulator by cooperating with p53 in transcriptional activation of p53-responsive genes and may act as a tumor suppressor. This Mus musculus (Mouse) protein is Inhibitor of growth protein 1 (Ing1).